Reading from the N-terminus, the 90-residue chain is Small ribosomal subunit protein uS19 (90 aa).

The protein belongs to the universal ribosomal protein uS19 family.

Protein S19 forms a complex with S13 that binds strongly to the 16S ribosomal RNA. In Methylococcus capsulatus (strain ATCC 33009 / NCIMB 11132 / Bath), this protein is Small ribosomal subunit protein uS19.